Reading from the N-terminus, the 771-residue chain is Rho guanine nucleotide exchange factor 6 (771 aa).

The 111-residue stretch at 1–111 folds into the Calponin-homology (CH) domain; it reads MNPEERLVTW…TLLAVNKATE (111 aa). The segment at 115-157 is disordered; that stretch reads SERPCGRSSSLSAATSSQTNPQVAVPSTAPEQHSEEKAEMTEN. The span at 122 to 131 shows a compositional bias: low complexity; sequence SSSLSAATSS. Position 126 is a phosphoserine (Ser-126). A Phosphothreonine modification is found at Thr-133. An SH3 domain is found at 159–218; that stretch reads SHQLIVKARFNFKQTNEDELSVCKGDIIYVTRVEEGGWWEGTLNGRTGWFPSNYVREIKP. Ser-224 bears the Phosphoserine mark. One can recognise a DH domain in the interval 240-420; that stretch reads YYTVVLQNIL…KTLMGQCQDL (181 aa). Positions 442 to 547 constitute a PH domain; the sequence is DIKTLGNVIF…WMEQLNRLTK (106 aa). Ser-487 bears the Phosphoserine mark. Over residues 556–572 the composition is skewed to low complexity; the sequence is SKTSSSSCSTHSSFSST. The segment at 556 to 580 is disordered; it reads SKTSSSSCSTHSSFSSTGQPRGPLE. Phosphoserine occurs at positions 639 and 679.

As to quaternary structure, interacts with PAK kinases through the SH3 domain. Interacts with GIT1. Component of cytoplasmic complexes, which also contain PXN, GIT1 and PAK1. Interacts with BIN2. Identified in a complex with BIN2 and GIT2. Interacts with PARVB. Interacts with PARVG; the guanine nucleotide exchange factor activity of ARHGEF6 is essential for PARVG-induced enhancement of cell spreading. Detected in adult heart, spleen, lung, skeletal muscle, kidney and testis. Detected throughout embryogenesis.

It localises to the cell projection. The protein localises to the lamellipodium. Functionally, acts as a RAC1 guanine nucleotide exchange factor (GEF). The chain is Rho guanine nucleotide exchange factor 6 (Arhgef6) from Mus musculus (Mouse).